Reading from the N-terminus, the 238-residue chain is 14-3-3 protein 2 (238 aa).

The protein belongs to the 14-3-3 family.

Its function is as follows. Probable adapter protein. This is 14-3-3 protein 2 from Entamoeba histolytica (strain ATCC 30459 / HM-1:IMSS / ABRM).